Consider the following 400-residue polypeptide: Probable tRNA pseudouridine synthase D (400 aa).

Aspartate 89 acts as the Nucleophile in catalysis. A TRUD domain is found at 162–357 (GVPNYYGLQR…AGGDRKPALL (196 aa)).

The protein belongs to the pseudouridine synthase TruD family.

The catalysed reaction is uridine(13) in tRNA = pseudouridine(13) in tRNA. Functionally, could be responsible for synthesis of pseudouridine from uracil-13 in transfer RNAs. In Methanopyrus kandleri (strain AV19 / DSM 6324 / JCM 9639 / NBRC 100938), this protein is Probable tRNA pseudouridine synthase D.